Consider the following 130-residue polypeptide: Small ribosomal subunit protein uS9 (130 aa).

Belongs to the universal ribosomal protein uS9 family.

In Pseudomonas fluorescens (strain SBW25), this protein is Small ribosomal subunit protein uS9.